The chain runs to 309 residues: Succinate--CoA ligase [ADP-forming] subunit alpha-2, mitochondrial (309 aa).

The N-terminal 9 residues, 1–9 (MLSSSFERN), are a transit peptide targeting the hydrogenosome. Residues lysine 54 and 107–109 (ITE) contribute to the CoA site. Tyrosine 171 serves as a coordination point for substrate. The Tele-phosphohistidine intermediate role is filled by histidine 262.

The protein belongs to the succinate/malate CoA ligase alpha subunit family. Heterodimer of an alpha and a beta subunit.

The protein localises to the hydrogenosome lumen. The enzyme catalyses succinate + ATP + CoA = succinyl-CoA + ADP + phosphate. The protein operates within carbohydrate metabolism; tricarboxylic acid cycle; succinate from succinyl-CoA (ligase route): step 1/1. Succinyl-CoA synthetase functions in the citric acid cycle (TCA), coupling the hydrolysis of succinyl-CoA to the synthesis of ATP and thus represents the only step of substrate-level phosphorylation in the TCA. The alpha subunit of the enzyme binds the substrates coenzyme A and phosphate, while succinate binding and nucleotide specificity is provided by the beta subunit. The polypeptide is Succinate--CoA ligase [ADP-forming] subunit alpha-2, mitochondrial (ALPHA-SCS2) (Trichomonas vaginalis).